The chain runs to 304 residues: MMKQRTIATPVKTVGIGLHSGRKVTISIKPAPVNSGVQFIRVDTPERSVVPATALAVCDTRLASVIQKDGVRVSTVEHLLSACAGLGLDNLLIELDGEEVPIMDGSAASFLFLIESAGIAEQEVPRQFVVIKKPVEVREGDKLARLEPFFGFKLDFTIDFKHPAVDKTGQRFVVDFSEHAYRSEIGRARTFGFAHEVEALREMGLARGGSLDNAIVLDEHRILNNEELRYEDEFVRHKILDAIGDLYLIGHPIVGAYVAEKSGHALNNALLRKLLEDPSSYEISTFAENKAPGAYSQESQPLFF.

Residues His-78, His-237, and Asp-241 each contribute to the Zn(2+) site. His-264 serves as the catalytic Proton donor.

Belongs to the LpxC family. It depends on Zn(2+) as a cofactor.

It carries out the reaction a UDP-3-O-[(3R)-3-hydroxyacyl]-N-acetyl-alpha-D-glucosamine + H2O = a UDP-3-O-[(3R)-3-hydroxyacyl]-alpha-D-glucosamine + acetate. It functions in the pathway glycolipid biosynthesis; lipid IV(A) biosynthesis; lipid IV(A) from (3R)-3-hydroxytetradecanoyl-[acyl-carrier-protein] and UDP-N-acetyl-alpha-D-glucosamine: step 2/6. Its function is as follows. Catalyzes the hydrolysis of UDP-3-O-myristoyl-N-acetylglucosamine to form UDP-3-O-myristoylglucosamine and acetate, the committed step in lipid A biosynthesis. This is UDP-3-O-acyl-N-acetylglucosamine deacetylase from Polynucleobacter necessarius subsp. necessarius (strain STIR1).